A 789-amino-acid chain; its full sequence is Ent-kaurene synthase TSP4, chloroplastic (789 aa).

Mg(2+) contacts are provided by Asp540 and Asp544. A DDXXD motif motif is present at residues 540 to 544; sequence DDFFD. The helical transmembrane segment at 638–656 threads the bilayer; the sequence is AYVSFALGPIVLPALYLVG. Mg(2+)-binding residues include Asn684, Arg687, and Glu692.

This sequence belongs to the terpene synthase family. Mg(2+) serves as cofactor. Expressed in leaves and fruits, including trichomes.

Its subcellular location is the plastid. It is found in the chloroplast membrane. It catalyses the reaction ent-copalyl diphosphate = ent-kaur-16-ene + diphosphate. Its pathway is plant hormone biosynthesis; gibberellin biosynthesis. Functionally, involved in the biosynthesis of labdane-type diterpenoid including cleroda-dienols, and peregrinol lactones and furan derivatives, dopaminergic diterpenoids that can bind to dopamine receptors in the human pituitary gland, have probably ability to lower prolactin levels, and are used to treat menstrual cycle disorders (e.g. premenstrual syndrome and mastodynia). Terpene synthase that produces ent-kaurene from ent-copalyl diphosphate. This is Ent-kaurene synthase TSP4, chloroplastic from Vitex agnus-castus (Chaste tree).